Consider the following 104-residue polypeptide: Gastrin (104 aa).

The signal sequence occupies residues 1 to 21 (MQRLCVYVLILALALATFSEA). A propeptide spanning residues 22-58 (SWKPRSRLQDAPSGPGANRGLEPHGLDQLGPASHHRR) is cleaved from the precursor. A disordered region spans residues 22-70 (SWKPRSRLQDAPSGPGANRGLEPHGLDQLGPASHHRRQLGLQGPPQLVA). 2 positions are modified to pyrrolidone carboxylic acid: Gln59 and Gln76. The residue at position 87 (Tyr87) is a Sulfotyrosine. Position 92 is a phenylalanine amide (Phe92). Phosphoserine is present on Ser96. A propeptide spanning residues 96–104 (SAEEGDQRP) is cleaved from the precursor.

Belongs to the gastrin/cholecystokinin family.

The protein resides in the secreted. Its function is as follows. Gastrin stimulates the stomach mucosa to produce and secrete hydrochloric acid and the pancreas to secrete its digestive enzymes. It also stimulates smooth muscle contraction and increases blood circulation and water secretion in the stomach and intestine. The sequence is that of Gastrin (GAST) from Canis lupus familiaris (Dog).